The following is a 62-amino-acid chain: DNA gyrase inhibitor YacG (62 aa).

4 residues coordinate Zn(2+): cysteine 8, cysteine 11, cysteine 27, and cysteine 31.

Belongs to the DNA gyrase inhibitor YacG family. Interacts with GyrB. Requires Zn(2+) as cofactor.

Its function is as follows. Inhibits all the catalytic activities of DNA gyrase by preventing its interaction with DNA. Acts by binding directly to the C-terminal domain of GyrB, which probably disrupts DNA binding by the gyrase. This Actinobacillus pleuropneumoniae serotype 5b (strain L20) protein is DNA gyrase inhibitor YacG.